The sequence spans 132 residues: Large ribosomal subunit protein uL22c (132 aa).

The protein belongs to the universal ribosomal protein uL22 family. Part of the 50S ribosomal subunit.

It is found in the plastid. It localises to the chloroplast. Functionally, this protein binds specifically to 23S rRNA. In terms of biological role, the globular domain of the protein is located near the polypeptide exit tunnel on the outside of the subunit, while an extended beta-hairpin is found that lines the wall of the exit tunnel in the center of the 70S ribosome. This Populus trichocarpa (Western balsam poplar) protein is Large ribosomal subunit protein uL22c (rpl22).